Consider the following 394-residue polypeptide: Obg-like ATPase 1 (394 aa).

Residues 21-285 enclose the OBG-type G domain; it reads LKAGIVGLAN…MSPEDAEEEL (265 aa). 30 to 35 lines the ATP pocket; that stretch reads NVGKST. Mg(2+)-binding residues include S34 and T55. T89 is modified (phosphothreonine). A Glycyl lysine isopeptide (Lys-Gly) (interchain with G-Cter in ubiquitin) cross-link involves residue K98. 2 positions are modified to phosphoserine: S116 and S119. L233 lines the ATP pocket. One can recognise a TGS domain in the interval 306–389; it reads DLISFFTCGP…EDGDIIYFRA (84 aa).

The protein belongs to the TRAFAC class OBG-HflX-like GTPase superfamily. OBG GTPase family. YchF/OLA1 subfamily. As to quaternary structure, monomer. Interacts with the 26S proteasome subunit RPT6. Mg(2+) serves as cofactor.

It localises to the cytoplasm. Functionally, hydrolyzes ATP, and can also hydrolyze GTP with lower efficiency. Has lower affinity for GTP. The protein is Obg-like ATPase 1 of Saccharomyces cerevisiae (strain ATCC 204508 / S288c) (Baker's yeast).